The sequence spans 398 residues: Candidapepsin-2 (398 aa).

Residues 1 to 18 (MFLKNIFIGLAIALLVDA) form the signal peptide. A propeptide spans 19 to 56 (TPTTTKRSAGFVALDFSVVKTPKAFPVTNGQEGKTSKR) (activation peptide). Positions 70–384 (YAADITVGSN…DLDNNEISLA (315 aa)) constitute a Peptidase A1 domain. The active site involves Asp-88. 88–90 (DTG) is a binding site for pepstatin A. Cys-103 and Cys-115 are oxidised to a cystine. Residues 141-142 (GD) and 274-278 (DSGTT) each bind pepstatin A. Residue Asp-274 is part of the active site. Residues Cys-312 and Cys-350 are joined by a disulfide bond. 2 N-linked (GlcNAc...) asparagine glycosylation sites follow: Asn-313 and Asn-321.

This sequence belongs to the peptidase A1 family. In terms of assembly, monomer. Post-translationally, O-glycosylated.

Its subcellular location is the secreted. The catalysed reaction is Preferential cleavage at the carboxyl of hydrophobic amino acids, but fails to cleave 15-Leu-|-Tyr-16, 16-Tyr-|-Leu-17 and 24-Phe-|-Phe-25 of insulin B chain. Activates trypsinogen, and degrades keratin.. The sequence is that of Candidapepsin-2 (SAP2) from Candida albicans (strain WO-1) (Yeast).